The sequence spans 110 residues: uncharacterized protein (110 aa).

This is an uncharacterized protein from Microplitis demolitor bracovirus (isolate Webb) (MdBV).